The primary structure comprises 509 residues: Dihydrolipoyl dehydrogenase, mitochondrial (509 aa).

The transit peptide at 1–35 directs the protein to the mitochondrion; sequence MQSWSRVYRSLAKKGHFNRISHGLQGVSSVPLRTY. Lysine 66 bears the N6-acetyllysine; alternate mark. Position 66 is an N6-succinyllysine; alternate (lysine 66). Residues 71–80 and lysine 89 each bind FAD; that span reads EKNETLGGTC. The cysteines at positions 80 and 85 are disulfide-linked. Lysine 104, lysine 122, lysine 132, and lysine 143 each carry N6-acetyllysine; alternate. N6-succinyllysine; alternate is present on residues lysine 104, lysine 122, lysine 132, and lysine 143. Residue glycine 154 participates in FAD binding. An N6-succinyllysine mark is found at lysine 159 and lysine 166. 183–185 provides a ligand contact to FAD; the sequence is TGS. NAD(+) contacts are provided by residues 220-227 and glutamate 243; that span reads GAGVIGVE. 2 positions are modified to N6-succinyllysine: lysine 273 and lysine 277. Valine 278 is a binding site for NAD(+). 2 positions are modified to phosphoserine: serine 285 and serine 297. Glycine 314 is an NAD(+) binding site. N6-acetyllysine; alternate is present on lysine 334. N6-succinyllysine; alternate is present on lysine 334. Lysine 346 is modified (N6-acetyllysine). Residues aspartate 355 and 361 to 364 contribute to the FAD site; that span reads MLAH. N6-acetyllysine; alternate is present on lysine 410. The residue at position 410 (lysine 410) is an N6-succinyllysine; alternate. An N6-acetyllysine mark is found at lysine 417 and lysine 420. At lysine 430 the chain carries N6-succinyllysine. Histidine 487 serves as the catalytic Proton acceptor. An N6-acetyllysine; alternate modification is found at lysine 505. Lysine 505 carries the post-translational modification N6-succinyllysine; alternate.

The protein belongs to the class-I pyridine nucleotide-disulfide oxidoreductase family. As to quaternary structure, homodimer. Part of the multimeric pyruvate dehydrogenase complex that contains multiple copies of pyruvate dehydrogenase (subunits PDHA (PDHA1 or PDHA2) and PDHB, E1), dihydrolipoamide acetyltransferase (DLAT, E2) and lipoamide dehydrogenase (DLD, E3). These subunits are bound to an inner core composed of about 48 DLAT and 12 PDHX molecules (by non covalent bonds). The 2-oxoglutarate dehydrogenase complex is composed of OGDH (2-oxoglutarate dehydrogenase; E1), DLST (dihydrolipoamide succinyltransferase; E2), DLD (dihydrolipoamide dehydrogenase; E3) and the assembly factor KGD4. It contains multiple copies of the three enzymatic components (E1, E2 and E3). In the nucleus, the 2-oxoglutarate dehydrogenase complex associates with KAT2A. Interacts with PDHX. Requires FAD as cofactor. Tyrosine phosphorylated. As to expression, expressed in liver (at protein level).

The protein localises to the mitochondrion matrix. The protein resides in the nucleus. Its subcellular location is the cell projection. It localises to the cilium. It is found in the flagellum. The protein localises to the cytoplasmic vesicle. The protein resides in the secretory vesicle. Its subcellular location is the acrosome. It carries out the reaction N(6)-[(R)-dihydrolipoyl]-L-lysyl-[protein] + NAD(+) = N(6)-[(R)-lipoyl]-L-lysyl-[protein] + NADH + H(+). Its function is as follows. Lipoamide dehydrogenase is a component of the glycine cleavage system as well as an E3 component of three alpha-ketoacid dehydrogenase complexes (pyruvate-, alpha-ketoglutarate-, and branched-chain amino acid-dehydrogenase complex). The 2-oxoglutarate dehydrogenase complex is mainly active in the mitochondrion. A fraction of the 2-oxoglutarate dehydrogenase complex also localizes in the nucleus and is required for lysine succinylation of histones: associates with KAT2A on chromatin and provides succinyl-CoA to histone succinyltransferase KAT2A. In monomeric form may have additional moonlighting function as serine protease. Involved in the hyperactivation of spermatazoa during capacitation and in the spermatazoal acrosome reaction. This chain is Dihydrolipoyl dehydrogenase, mitochondrial (Dld), found in Mus musculus (Mouse).